A 257-amino-acid chain; its full sequence is Regulator of G-protein signaling 7-binding protein (257 aa).

A disordered region spans residues 1–45 (MSSAPNGRKKRPSRSTRSSIFQISKPPLQSGDWERRGSGSESAHK). Basic and acidic residues predominate over residues 32-45 (DWERRGSGSESAHK). The short motif at 242–247 (RRRKRR) is the Nuclear localization signal element. 2 S-palmitoyl cysteine lipidation sites follow: cysteine 252 and cysteine 253.

It belongs to the RGS7BP/RGS9BP family. As to quaternary structure, interacts with 'R7' family proteins RGS6, RGS7, RGS9 and RGS11. Component of some R7-Gbeta5 complex composed of some R7 protein (RGS6, RGS7, RGS9 or RGS11), Gbeta5 (GNB5) and RGS7BP. Post-translationally, palmitoylated. Undergoes rapid palmitoylation turnover. De novo and turnover palmitoylation are both mediated by ZDHHC2. Palmitoylation regulates the cell membrane and nuclear shuttling and the regulation of GPCR signaling. Upon depalmitoylation, it is targeted from the plasma membrane into the nucleus. GPCR signaling inhibits depalmitoylation and promotes localization to the plasma membrane. As to expression, specifically expressed in the central nervous system including the retina but not in other non-neuronal tissues (at protein level).

It is found in the nucleus. Its subcellular location is the cytoplasm. The protein localises to the cell membrane. Regulator of G protein-coupled receptor (GPCR) signaling. Regulatory subunit of the R7-Gbeta5 complexes that acts by controlling the subcellular location of the R7-Gbeta5 complexes. When palmitoylated, it targets the R7-Gbeta5 complexes to the plasma membrane, leading to inhibit G protein alpha subunits. When it is unpalmitoylated, the R7-Gbeta5 complexes undergo a nuclear/cytoplasmic shuttling. May also act by controlling the proteolytic stability of R7 proteins, probably by protecting them from degradation. The chain is Regulator of G-protein signaling 7-binding protein (Rgs7bp) from Mus musculus (Mouse).